A 136-amino-acid chain; its full sequence is Small ribosomal subunit protein eS8 (136 aa).

The segment at 1-23 (MGVYHGNDLKKPTGGKKRPHQKV) is disordered. A compositionally biased stretch (basic residues) spans 13 to 23 (TGGKKRPHQKV).

Belongs to the eukaryotic ribosomal protein eS8 family. In terms of assembly, part of the 30S ribosomal subunit.

The chain is Small ribosomal subunit protein eS8 from Hyperthermus butylicus (strain DSM 5456 / JCM 9403 / PLM1-5).